Consider the following 241-residue polypeptide: MGQKINPIGFRLGINRTWDSRWFADNAEYGQLLHEDLKMRKFVMDELKQAGISKVVIERPHKKCRVTIHSARPGLIIGKKGADIDKLRKKLSDMTNSETHLNIVEVRKPEIDAVLVAQSIAQQLERRVAFRRAMKRAVQSAMRLGAEGIKITCGGRLGGAEIARTEWYREGRVPLHTLRADIDYGTAEAETAFGICGIKVWIFKGEILEHDPMASERRALEGDAQGPASRDRDRDRRRDNA.

Residues 39 to 107 (MRKFVMDELK…ETHLNIVEVR (69 aa)) enclose the KH type-2 domain. Positions 214–241 (ASERRALEGDAQGPASRDRDRDRRRDNA) are disordered. Residues 229–241 (SRDRDRDRRRDNA) show a composition bias toward basic and acidic residues.

It belongs to the universal ribosomal protein uS3 family. Part of the 30S ribosomal subunit. Forms a tight complex with proteins S10 and S14.

Its function is as follows. Binds the lower part of the 30S subunit head. Binds mRNA in the 70S ribosome, positioning it for translation. The protein is Small ribosomal subunit protein uS3 of Rhizobium rhizogenes (strain K84 / ATCC BAA-868) (Agrobacterium radiobacter).